A 441-amino-acid polypeptide reads, in one-letter code: Proline--tRNA ligase (441 aa).

It belongs to the class-II aminoacyl-tRNA synthetase family. ProS type 2 subfamily. As to quaternary structure, homodimer.

The protein resides in the cytoplasm. It carries out the reaction tRNA(Pro) + L-proline + ATP = L-prolyl-tRNA(Pro) + AMP + diphosphate. Functionally, catalyzes the attachment of proline to tRNA(Pro) in a two-step reaction: proline is first activated by ATP to form Pro-AMP and then transferred to the acceptor end of tRNA(Pro). The chain is Proline--tRNA ligase from Bartonella tribocorum (strain CIP 105476 / IBS 506).